The chain runs to 367 residues: Endophilin-A2 (367 aa).

A membrane-binding amphipathic helix region spans residues 1-21; the sequence is MSVAGLKKQFYKASQLVSEKV. In terms of domain architecture, BAR spans 18-249; it reads SEKVGGAEGT…LKRRMREASS (232 aa). The interval 60-87 is required for dimerization upon membrane association; that stretch reads PNPASRAKLTMLNTMSKIRGQVKNPGYP. Positions 181 to 250 form a coiled coil; that stretch reads EELRQAMEKF…KRRMREASSR (70 aa). The segment at 218-254 is interaction with ARC; the sequence is LVDAQLDYHRQAVQILDELAEKLKRRMREASSRPRRE. The interval 243-293 is disordered; it reads RMREASSRPRREYKPKPRETYDFGESDQSNGGFSCTPTPKVSASSSFRSDK. The segment covering 245-263 has biased composition (basic and acidic residues); it reads REASSRPRREYKPKPRETY. The span at 268 to 289 shows a compositional bias: polar residues; that stretch reads SDQSNGGFSCTPTPKVSASSSF. In terms of domain architecture, SH3 spans 305–364; the sequence is LDQPCCKALYDFEPENDGELGFKEGDIITLTNQIDENWYEGMINGQSGFFPLNYVEVLVP.

This sequence belongs to the endophilin family. As to quaternary structure, interacts with ARC. Interacts with SYNJ1 and DNM1. As to expression, highest level in central region of the theca of developing follicles (at protein level). Expressed at highest level in brain and testis, at high level in kidney, lung and stroma, low level in spleen and adrenal gland (at protein level). Expressed in most tissue with highest levels in small ovarian follicles, brain and testis.

It is found in the cytoplasm. The protein resides in the early endosome membrane. Its subcellular location is the cell projection. The protein localises to the podosome. Functionally, implicated in endocytosis. May recruit other proteins to membranes with high curvature. This Gallus gallus (Chicken) protein is Endophilin-A2.